A 930-amino-acid polypeptide reads, in one-letter code: Isoleucine--tRNA ligase (930 aa).

Residues 57–67 (PYANGHIHLGT) carry the 'HIGH' region motif. Residue E559 participates in L-isoleucyl-5'-AMP binding. The short motif at 600–604 (KMSKS) is the 'KMSKS' region element. Residue K603 participates in ATP binding. 4 residues coordinate Zn(2+): C899, C902, C918, and C921.

This sequence belongs to the class-I aminoacyl-tRNA synthetase family. IleS type 1 subfamily. As to quaternary structure, monomer. It depends on Zn(2+) as a cofactor.

It is found in the cytoplasm. It carries out the reaction tRNA(Ile) + L-isoleucine + ATP = L-isoleucyl-tRNA(Ile) + AMP + diphosphate. Its function is as follows. Catalyzes the attachment of isoleucine to tRNA(Ile). As IleRS can inadvertently accommodate and process structurally similar amino acids such as valine, to avoid such errors it has two additional distinct tRNA(Ile)-dependent editing activities. One activity is designated as 'pretransfer' editing and involves the hydrolysis of activated Val-AMP. The other activity is designated 'posttransfer' editing and involves deacylation of mischarged Val-tRNA(Ile). The polypeptide is Isoleucine--tRNA ligase (Desulforudis audaxviator (strain MP104C)).